A 427-amino-acid chain; its full sequence is Peptidyl-prolyl cis-trans isomerase sig-7 (427 aa).

The PPIase cyclophilin-type domain maps to 6 to 161 (ETTLGDLIID…KDIRISHTIV (156 aa)). Residues 195–227 (DEKEDEDEGKTAEEIAEELQQREMAEQAQILEM) are a coiled coil. The RRM domain maps to 241–319 (NVLFVCKLNP…RRIHVDFSQS (79 aa)). Polar residues predominate over residues 322 to 334 (QNYKYKPKSQQQE). Residues 322–427 (QNYKYKPKSQ…RSPDRRRDRR (106 aa)) are disordered. Basic residues predominate over residues 351–370 (SHQRSPSPRRRRSPSPKKDK). Residues 384–427 (SSDNHRDRDRSYRDNNRDRRDNHRDSDRDRRRHDRSPDRRRDRR) are compositionally biased toward basic and acidic residues.

This sequence belongs to the cyclophilin-type PPIase family. PPIL4 subfamily. In terms of assembly, interacts with ama-1, the catalytic subunit of the RNA polymerase II (RNA pol II) complex. As to expression, ubiquitous.

The protein resides in the nucleus. It localises to the nucleoplasm. It is found in the chromosome. It carries out the reaction [protein]-peptidylproline (omega=180) = [protein]-peptidylproline (omega=0). Its function is as follows. Probable PPIase that accelerates the folding of proteins. It catalyzes the cis-trans isomerization of proline imidic peptide bonds in oligopeptides. Involved in RNA polymerase II (RNA pol II)-mediated transcription elongation, and in primary transcript splicing, including co-transcriptional trans-splicing, in association with the catalytic subunit of the RNA pol II complex ama-1. Also plays a role in the regulation of elongation-dependent phosphorylation of ama-1 to control transcription. Involved in the transcription of several genes during embryogenesis and in particular, of genes related to developmental processes such as gastrulation, and also regulates transcription in germ cells from embryogenesis to adulthood. In Caenorhabditis elegans, this protein is Peptidyl-prolyl cis-trans isomerase sig-7.